Reading from the N-terminus, the 246-residue chain is Adenosine 5'-phosphosulfate reductase (246 aa).

Cysteine 131, cysteine 132, cysteine 214, and cysteine 217 together coordinate [4Fe-4S] cluster. Cysteine 242 (nucleophile; cysteine thiosulfonate intermediate) is an active-site residue.

This sequence belongs to the PAPS reductase family. CysH subfamily. The cofactor is [4Fe-4S] cluster.

It is found in the cytoplasm. It carries out the reaction [thioredoxin]-disulfide + sulfite + AMP + 2 H(+) = adenosine 5'-phosphosulfate + [thioredoxin]-dithiol. The protein operates within sulfur metabolism; hydrogen sulfide biosynthesis; sulfite from sulfate. Its function is as follows. Catalyzes the formation of sulfite from adenosine 5'-phosphosulfate (APS) using thioredoxin as an electron donor. This chain is Adenosine 5'-phosphosulfate reductase, found in Neisseria meningitidis serogroup B (strain ATCC BAA-335 / MC58).